Here is a 268-residue protein sequence, read N- to C-terminus: Methionine aminopeptidase (268 aa).

Histidine 79 contributes to the substrate binding site. 3 residues coordinate a divalent metal cation: aspartate 97, aspartate 108, and histidine 172. Histidine 179 contacts substrate. Positions 205 and 236 each coordinate a divalent metal cation.

The protein belongs to the peptidase M24A family. Methionine aminopeptidase type 1 subfamily. Monomer. Co(2+) serves as cofactor. The cofactor is Zn(2+). Mn(2+) is required as a cofactor. It depends on Fe(2+) as a cofactor.

The catalysed reaction is Release of N-terminal amino acids, preferentially methionine, from peptides and arylamides.. Removes the N-terminal methionine from nascent proteins. The N-terminal methionine is often cleaved when the second residue in the primary sequence is small and uncharged (Met-Ala-, Cys, Gly, Pro, Ser, Thr, or Val). Requires deformylation of the N(alpha)-formylated initiator methionine before it can be hydrolyzed. In Haemophilus influenzae (strain ATCC 51907 / DSM 11121 / KW20 / Rd), this protein is Methionine aminopeptidase.